The sequence spans 218 residues: UPF0502 protein CJA_1529 (218 aa).

The protein belongs to the UPF0502 family.

This chain is UPF0502 protein CJA_1529, found in Cellvibrio japonicus (strain Ueda107) (Pseudomonas fluorescens subsp. cellulosa).